Here is a 20-residue protein sequence, read N- to C-terminus: Serum amyloid P-component (20 aa).

The region spanning 1–20 (ZPIDLMGKVFVFDKELSPBI) is the Pentraxin (PTX) domain.

Belongs to the pentraxin family. As to quaternary structure, homopentamer. Pentraxin (or pentaxin) have a discoid arrangement of 5 non-covalently bound subunits.

Its subcellular location is the secreted. The protein is Serum amyloid P-component of Pleuronectes platessa (European plaice).